Here is a 1474-residue protein sequence, read N- to C-terminus: Alpha-2-macroglobulin (1474 aa).

Residues 1–23 (MGKNKLLHPSLVLLLLVLLPTDA) form the signal peptide. An intrachain disulfide couples Cys48 to Cys86. A glycan (N-linked (GlcNAc...) (complex) asparagine) is linked at Asn55. Residues Asn70 and Asn247 are each glycosylated (N-linked (GlcNAc...) asparagine). 2 cysteine pairs are disulfide-bonded: Cys251–Cys299 and Cys269–Cys287. 2 N-linked (GlcNAc...) asparagine glycosylation sites follow: Asn396 and Asn410. Intrachain disulfides connect Cys470-Cys563, Cys595-Cys771, Cys642-Cys689, Cys821-Cys849, Cys847-Cys883, Cys921-Cys1321, Cys1079-Cys1127, and Cys1352-Cys1467. Residues 690-728 (PQLQQYEMHGPEGLRVGFYESDVMGRGHARLVHVEEPHT) are bait region. Isoglutamyl lysine isopeptide (Gln-Lys) (interchain with K-? in other proteins) cross-links involve residues Gln693 and Gln694. 3 inhibitory regions span residues 704 to 709 (RVGFYE), 719 to 723 (RLVHV), and 730 to 735 (TVRKYF). Asn869 carries an N-linked (GlcNAc...) asparagine glycan. Positions 972–975 (CGEQ) form a cross-link, isoglutamyl cysteine thioester (Cys-Gln). Asn991 carries an N-linked (GlcNAc...) asparagine glycan. N-linked (GlcNAc...) (complex) asparagine glycosylation occurs at Asn1424.

Belongs to the protease inhibitor I39 (alpha-2-macroglobulin) family. In terms of assembly, homotetramer; disulfide-linked. Secreted in plasma.

Its subcellular location is the secreted. Is able to inhibit all four classes of proteinases by a unique 'trapping' mechanism. This protein has a peptide stretch, called the 'bait region' which contains specific cleavage sites for different proteinases. When a proteinase cleaves the bait region, a conformational change is induced in the protein which traps the proteinase. The entrapped enzyme remains active against low molecular weight substrates (activity against high molecular weight substrates is greatly reduced). Following cleavage in the bait region, a thioester bond is hydrolyzed and mediates the covalent binding of the protein to the proteinase. This chain is Alpha-2-macroglobulin (A2M), found in Homo sapiens (Human).